The following is a 562-amino-acid chain: Arylsulfatase H (562 aa).

Positions 15, 16, and 55 each coordinate Ca(2+). The active-site Nucleophile is C55. At C55 the chain carries 3-oxoalanine (Cys). K115 contacts substrate. H117 is a catalytic residue. 2 helical membrane-spanning segments follow: residues 167-187 (LWIS…PKYA) and 189-209 (WFVV…LFFI). H271 lines the substrate pocket. 2 residues coordinate Ca(2+): D323 and N324.

Belongs to the sulfatase family. Ca(2+) serves as cofactor. In terms of processing, the conversion to 3-oxoalanine (also known as C-formylglycine, FGly), of a serine or cysteine residue in prokaryotes and of a cysteine residue in eukaryotes, is critical for catalytic activity.

It localises to the membrane. This Canis lupus familiaris (Dog) protein is Arylsulfatase H (ARSH).